The following is an 865-amino-acid chain: DNA-directed RNA polymerase subunit Rpo1N (865 aa).

Positions 60, 63, 70, 73, 100, 103, 146, and 149 each coordinate Zn(2+). The Mg(2+) site is built by D451, D453, and D455. The interval 500–531 is disordered; it reads EHTSSQGKRLFSVRSRPPDPQEGRAPPPDREG. Over residues 515-531 the composition is skewed to basic and acidic residues; sequence RPPDPQEGRAPPPDREG.

This sequence belongs to the RNA polymerase beta' chain family. As to quaternary structure, part of the RNA polymerase complex. It depends on Mg(2+) as a cofactor. The cofactor is Zn(2+).

The protein resides in the cytoplasm. The catalysed reaction is RNA(n) + a ribonucleoside 5'-triphosphate = RNA(n+1) + diphosphate. Functionally, DNA-dependent RNA polymerase (RNAP) catalyzes the transcription of DNA into RNA using the four ribonucleoside triphosphates as substrates. Forms the clamp head domain. This chain is DNA-directed RNA polymerase subunit Rpo1N, found in Methanothermobacter thermautotrophicus (strain Winter) (Methanobacterium thermoautotrophicum).